We begin with the raw amino-acid sequence, 337 residues long: UDP-3-O-acylglucosamine N-acyltransferase (337 aa).

Catalysis depends on His-238, which acts as the Proton acceptor.

This sequence belongs to the transferase hexapeptide repeat family. LpxD subfamily. In terms of assembly, homotrimer.

The catalysed reaction is a UDP-3-O-[(3R)-3-hydroxyacyl]-alpha-D-glucosamine + a (3R)-hydroxyacyl-[ACP] = a UDP-2-N,3-O-bis[(3R)-3-hydroxyacyl]-alpha-D-glucosamine + holo-[ACP] + H(+). It participates in bacterial outer membrane biogenesis; LPS lipid A biosynthesis. In terms of biological role, catalyzes the N-acylation of UDP-3-O-acylglucosamine using 3-hydroxyacyl-ACP as the acyl donor. Is involved in the biosynthesis of lipid A, a phosphorylated glycolipid that anchors the lipopolysaccharide to the outer membrane of the cell. The polypeptide is UDP-3-O-acylglucosamine N-acyltransferase (Xanthomonas axonopodis pv. citri (strain 306)).